The chain runs to 77 residues: Putative antitoxin VapB3 (77 aa).

Residues 10–60 (RRGLKKELEELGINYAEAVRKFLEELVARERRRRALERARALREELRKKGA) are a coiled coil.

As to quaternary structure, forms a complex with putative toxin VapC3, possibly VapB(2)-VapC(2).

Its function is as follows. Antitoxin component of a type II toxin-antitoxin (TA) system. This chain is Putative antitoxin VapB3 (vAPb3), found in Pyrobaculum aerophilum (strain ATCC 51768 / DSM 7523 / JCM 9630 / CIP 104966 / NBRC 100827 / IM2).